The primary structure comprises 577 residues: DNA-directed RNA polymerase subunit alpha (577 aa).

Positions 1–461 are alpha N-terminal domain (alpha-NTD); the sequence is MIKIIIKETF…QLFLPLQQIR (461 aa). The interval 510–577 is alpha C-terminal domain (alpha-CTD); it reads FDHRLLELDI…ALQLMKLTLK (68 aa).

It belongs to the RNA polymerase alpha chain family. In terms of assembly, in plastids the minimal PEP RNA polymerase catalytic core is composed of four subunits: alpha, beta, beta', and beta''. When a (nuclear-encoded) sigma factor is associated with the core the holoenzyme is formed, which can initiate transcription.

The protein localises to the plastid. Its subcellular location is the chloroplast. It carries out the reaction RNA(n) + a ribonucleoside 5'-triphosphate = RNA(n+1) + diphosphate. Its function is as follows. DNA-dependent RNA polymerase catalyzes the transcription of DNA into RNA using the four ribonucleoside triphosphates as substrates. The sequence is that of DNA-directed RNA polymerase subunit alpha from Tupiella akineta (Green alga).